Reading from the N-terminus, the 375-residue chain is CMP-N-acetylneuraminate-beta-1,4-galactoside alpha-2,3-sialyltransferase (375 aa).

Residues Met-1–Arg-8 are Cytoplasmic-facing. A helical; Signal-anchor for type II membrane protein transmembrane segment spans residues Asn-9–Trp-28. Residues Lys-29 to Ile-375 lie on the Lumenal side of the membrane. Asn-80 and Asn-171 each carry an N-linked (GlcNAc...) asparagine glycan. A disulfide bond links Cys-160 and Cys-314.

The protein belongs to the glycosyltransferase 29 family. In terms of processing, the soluble form derives from the membrane form by proteolytic processing. In terms of tissue distribution, highly expressed in adult skeletal muscle and in all fetal tissues examined and to a much lesser extent in placenta, lung and liver.

It is found in the golgi apparatus. The protein resides in the golgi stack membrane. It localises to the secreted. It carries out the reaction a beta-D-galactosyl-(1-&gt;4)-N-acetyl-beta-D-glucosaminyl derivative + CMP-N-acetyl-beta-neuraminate = an N-acetyl-alpha-neuraminyl-(2-&gt;3)-beta-D-galactosyl-(1-&gt;4)-N-acetyl-beta-D-glucosaminyl derivative + CMP + H(+). Its pathway is protein modification; protein glycosylation. Its function is as follows. Catalyzes the formation of the NeuAc-alpha-2,3-Gal-beta-1,4-GlcNAc-, NeuAc-alpha-2,3-Gal-beta-1,3-GlcNAc- and NeuAc-alpha-2,3-Gal-beta-1,3-GalNAc- sequences found in terminal carbohydrate groups of glycoproteins and glycolipids. The highest activity is toward Gal-beta-1,3-GlcNAc and the lowest toward Gal-beta-1,3-GalNAc. This chain is CMP-N-acetylneuraminate-beta-1,4-galactoside alpha-2,3-sialyltransferase (ST3GAL3), found in Homo sapiens (Human).